The primary structure comprises 122 residues: Methylglyoxal synthase (122 aa).

An MGS-like domain is found at 1 to 122; sequence MRIALIAHDK…DLFIKHLKGK (122 aa). Residues His-8, Lys-12, 34–37, and 54–55 each bind substrate; these read TGTT and SG. Residue Asp-60 is the Proton donor/acceptor of the active site. His-87 contacts substrate.

The protein belongs to the methylglyoxal synthase family.

The catalysed reaction is dihydroxyacetone phosphate = methylglyoxal + phosphate. Its function is as follows. Catalyzes the formation of methylglyoxal from dihydroxyacetone phosphate. This chain is Methylglyoxal synthase, found in Acholeplasma laidlawii (strain PG-8A).